The chain runs to 386 residues: Dual-specificity RNA methyltransferase RlmN (386 aa).

Glutamate 96 (proton acceptor) is an active-site residue. A Radical SAM core domain is found at 102 to 340 (ENDRATLCVS…VITRRTRGED (239 aa)). A disulfide bridge connects residues cysteine 109 and cysteine 345. Residues cysteine 116, cysteine 120, and cysteine 123 each contribute to the [4Fe-4S] cluster site. S-adenosyl-L-methionine-binding positions include 170-171 (GE), serine 202, 224-226 (SIH), and asparagine 302. Residue cysteine 345 is the S-methylcysteine intermediate of the active site.

Belongs to the radical SAM superfamily. RlmN family. [4Fe-4S] cluster serves as cofactor.

It is found in the cytoplasm. It carries out the reaction adenosine(2503) in 23S rRNA + 2 reduced [2Fe-2S]-[ferredoxin] + 2 S-adenosyl-L-methionine = 2-methyladenosine(2503) in 23S rRNA + 5'-deoxyadenosine + L-methionine + 2 oxidized [2Fe-2S]-[ferredoxin] + S-adenosyl-L-homocysteine. The catalysed reaction is adenosine(37) in tRNA + 2 reduced [2Fe-2S]-[ferredoxin] + 2 S-adenosyl-L-methionine = 2-methyladenosine(37) in tRNA + 5'-deoxyadenosine + L-methionine + 2 oxidized [2Fe-2S]-[ferredoxin] + S-adenosyl-L-homocysteine. In terms of biological role, specifically methylates position 2 of adenine 2503 in 23S rRNA and position 2 of adenine 37 in tRNAs. m2A2503 modification seems to play a crucial role in the proofreading step occurring at the peptidyl transferase center and thus would serve to optimize ribosomal fidelity. The chain is Dual-specificity RNA methyltransferase RlmN from Colwellia psychrerythraea (strain 34H / ATCC BAA-681) (Vibrio psychroerythus).